Reading from the N-terminus, the 454-residue chain is Tubulin beta-2 chain (454 aa).

GTP is bound by residues Q11, E69, S138, G142, T143, G144, N204, and N226. Position 69 (E69) interacts with Mg(2+). The tract at residues 426-454 (QEASVDDEAMEDDAEAEGGAGQNEAVEEF) is disordered. The segment covering 429–441 (SVDDEAMEDDAEA) has biased composition (acidic residues).

This sequence belongs to the tubulin family. In terms of assembly, dimer of alpha and beta chains. A typical microtubule is a hollow water-filled tube with an outer diameter of 25 nm and an inner diameter of 15 nM. Alpha-beta heterodimers associate head-to-tail to form protofilaments running lengthwise along the microtubule wall with the beta-tubulin subunit facing the microtubule plus end conferring a structural polarity. Microtubules usually have 13 protofilaments but different protofilament numbers can be found in some organisms and specialized cells. Mg(2+) is required as a cofactor.

The protein resides in the cytoplasm. Its subcellular location is the cytoskeleton. It localises to the spindle. The protein localises to the nucleus. Tubulin is the major constituent of microtubules, a cylinder consisting of laterally associated linear protofilaments composed of alpha- and beta-tubulin heterodimers. Microtubules grow by the addition of GTP-tubulin dimers to the microtubule end, where a stabilizing cap forms. Below the cap, tubulin dimers are in GDP-bound state, owing to GTPase activity of alpha-tubulin. Its function is as follows. This is the major beta tubulin of mitotic spindle. The chain is Tubulin beta-2 chain (BETC) from Physarum polycephalum (Slime mold).